Consider the following 317-residue polypeptide: MAKAPAKKFSGGAQRESAGGEQRKTAVFKMNTDLGQHILKNPLVAQGIVDKSDIKPSDTVLEVGPGTGNLTVRILEKARKVIAVEMDPRMAAELTKRVQGKPEQKKLEIMLGDCIKTELPYFDVCISNTPYQISSPLVFKLLNQPRPPRVSVLMFQHEFAMRLLARPGDSLYCRLSVNVQMWAKVSHVMKVGRGNFRPPPNVESSVVKIEVKNPRPPIDFNEWDGLLRVCFVRKNKTINAGFKTSAVLAVLEKNYQTWLSTQGEIIPEGSNLSDVVKQKINKILTDTGIGEMRSAKCDQTEFLTLLNEFHKAGIYFA.

Residues 1–22 (MAKAPAKKFSGGAQRESAGGEQ) form a disordered region. S-adenosyl-L-methionine is bound by residues H37, L39, G64, E85, D113, and N128.

The protein belongs to the class I-like SAM-binding methyltransferase superfamily. rRNA adenine N(6)-methyltransferase family.

It catalyses the reaction adenosine(1779)/adenosine(1780) in 18S rRNA + 4 S-adenosyl-L-methionine = N(6)-dimethyladenosine(1779)/N(6)-dimethyladenosine(1780) in 18S rRNA + 4 S-adenosyl-L-homocysteine + 4 H(+). Its function is as follows. Specifically dimethylates two adjacent adenosines in the loop of a conserved hairpin near the 3'-end of 18S rRNA in the 40S particle. This is Dimethyladenosine transferase (DIM1) from Yarrowia lipolytica (strain CLIB 122 / E 150) (Yeast).